The chain runs to 107 residues: Iron-binding protein IscA (107 aa).

3 residues coordinate Fe cation: cysteine 35, cysteine 99, and cysteine 101.

This sequence belongs to the HesB/IscA family. Homodimer; may form tetramers and higher multimers. Fe cation serves as cofactor.

Its function is as follows. Is able to transfer iron-sulfur clusters to apo-ferredoxin. Multiple cycles of [2Fe2S] cluster formation and transfer are observed, suggesting that IscA acts catalytically. Recruits intracellular free iron so as to provide iron for the assembly of transient iron-sulfur cluster in IscU in the presence of IscS, L-cysteine and the thioredoxin reductase system TrxA/TrxB. In Photorhabdus laumondii subsp. laumondii (strain DSM 15139 / CIP 105565 / TT01) (Photorhabdus luminescens subsp. laumondii), this protein is Iron-binding protein IscA.